The chain runs to 471 residues: Secretogranin-3 (471 aa).

Positions 1 to 22 (MGFLWTGTWIVVLMLHSSPIQA) are cleaved as a signal peptide. Disordered stretches follow at residues 23-72 (FPKP…ESNY) and 86-105 (EKEK…NDNK). A compositionally biased stretch (basic and acidic residues) spans 32-45 (KPLHNRELSAERPL). Ser40 bears the Phosphoserine mark. An O-linked (Xyl...) (chondroitin sulfate) serine glycan is attached at Ser40. N-linked (GlcNAc...) asparagine glycosylation occurs at Asn71. A compositionally biased stretch (basic and acidic residues) spans 86–96 (EKEKNEKERQS). N-linked (GlcNAc...) asparagine glycosylation is present at Asn353. The segment at 357 to 409 (LFAVPSEKSHEETDSTKEEAAKMEKEYGTLKDSTKDDDSNPRGKTDEHKGKTE) is disordered. Positions 363–409 (EKSHEETDSTKEEAAKMEKEYGTLKDSTKDDDSNPRGKTDEHKGKTE) are enriched in basic and acidic residues. The residue at position 365 (Ser365) is a Phosphoserine.

In terms of assembly, interacts with CHGA. Interacts with secretogranin II/SCG2. Interacts (via C-terminus) with CPE.

It is found in the cytoplasmic vesicle. Its subcellular location is the secretory vesicle. The protein resides in the secretory vesicle membrane. The protein localises to the secreted. In terms of biological role, member of the granin protein family that regulates the biogenesis of secretory granules. Acts as a sorting receptor for intragranular proteins including chromogranin A/CHGA. May also play a role in angiogenesis. Promotes endothelial proliferation, migration and tube formation through MEK/ERK signaling pathway. The sequence is that of Secretogranin-3 (SCG3) from Bos taurus (Bovine).